The sequence spans 199 residues: MLFEHLQYYGVSRKIIEAMNKVDRKLFVPSELQESAYLDIPLPIGYGQTISAPHMVGMMCEYLELKDGDRVLEIGTGSGYNAAVMSLLVGESGWIYTIERIPELVQEAQKRINLLGINNITIIVGDGKEGLEEYAPFDKITVTCYAKHIPKKLIEQLKDNGIMVIPVGNEYVQILKLIRKSGEKIIEEDLTHVRFVPMQ.

Ser51 is an active-site residue.

Belongs to the methyltransferase superfamily. L-isoaspartyl/D-aspartyl protein methyltransferase family.

The protein localises to the cytoplasm. It catalyses the reaction [protein]-L-isoaspartate + S-adenosyl-L-methionine = [protein]-L-isoaspartate alpha-methyl ester + S-adenosyl-L-homocysteine. In terms of biological role, catalyzes the methyl esterification of L-isoaspartyl residues in peptides and proteins that result from spontaneous decomposition of normal L-aspartyl and L-asparaginyl residues. It plays a role in the repair and/or degradation of damaged proteins. This chain is Protein-L-isoaspartate O-methyltransferase, found in Fervidobacterium nodosum (strain ATCC 35602 / DSM 5306 / Rt17-B1).